The primary structure comprises 408 residues: Imidazolonepropionase (408 aa).

Fe(3+)-binding residues include His73 and His75. Positions 73 and 75 each coordinate Zn(2+). 3 residues coordinate 4-imidazolone-5-propanoate: Arg82, Tyr145, and His178. Tyr145 is an N-formimidoyl-L-glutamate binding site. His243 serves as a coordination point for Fe(3+). Zn(2+) is bound at residue His243. Position 246 (Gln246) interacts with 4-imidazolone-5-propanoate. Asp318 is a binding site for Fe(3+). Asp318 is a binding site for Zn(2+). N-formimidoyl-L-glutamate contacts are provided by Asn320 and Gly322. Ser323 lines the 4-imidazolone-5-propanoate pocket.

It belongs to the metallo-dependent hydrolases superfamily. HutI family. It depends on Zn(2+) as a cofactor. Requires Fe(3+) as cofactor.

The protein localises to the cytoplasm. It catalyses the reaction 4-imidazolone-5-propanoate + H2O = N-formimidoyl-L-glutamate. It participates in amino-acid degradation; L-histidine degradation into L-glutamate; N-formimidoyl-L-glutamate from L-histidine: step 3/3. In terms of biological role, catalyzes the hydrolytic cleavage of the carbon-nitrogen bond in imidazolone-5-propanoate to yield N-formimidoyl-L-glutamate. It is the third step in the universal histidine degradation pathway. This Shewanella baltica (strain OS195) protein is Imidazolonepropionase.